We begin with the raw amino-acid sequence, 591 residues long: L-fucose isomerase (591 aa).

Residues glutamate 337 and aspartate 361 each act as proton acceptor in the active site. Positions 337, 361, and 528 each coordinate Mn(2+).

It belongs to the L-fucose isomerase family. Homohexamer. Requires Mn(2+) as cofactor.

The protein resides in the cytoplasm. The catalysed reaction is L-fucose = L-fuculose. The protein operates within carbohydrate degradation; L-fucose degradation; L-lactaldehyde and glycerone phosphate from L-fucose: step 1/3. Functionally, converts the aldose L-fucose into the corresponding ketose L-fuculose. This chain is L-fucose isomerase, found in Salmonella paratyphi B (strain ATCC BAA-1250 / SPB7).